We begin with the raw amino-acid sequence, 219 residues long: Endonuclease V (219 aa).

Mg(2+)-binding residues include aspartate 41 and aspartate 107.

It belongs to the endonuclease V family. It depends on Mg(2+) as a cofactor.

The protein resides in the cytoplasm. The enzyme catalyses Endonucleolytic cleavage at apurinic or apyrimidinic sites to products with a 5'-phosphate.. In terms of biological role, DNA repair enzyme involved in the repair of deaminated bases. Selectively cleaves double-stranded DNA at the second phosphodiester bond 3' to a deoxyinosine leaving behind the intact lesion on the nicked DNA. This chain is Endonuclease V, found in Desulfurococcus amylolyticus (strain DSM 18924 / JCM 16383 / VKM B-2413 / 1221n) (Desulfurococcus kamchatkensis).